Consider the following 410-residue polypeptide: Arginine deiminase (410 aa).

Cys-399 acts as the Amidino-cysteine intermediate in catalysis.

The protein belongs to the arginine deiminase family.

It localises to the cytoplasm. The catalysed reaction is L-arginine + H2O = L-citrulline + NH4(+). The protein operates within amino-acid degradation; L-arginine degradation via ADI pathway; carbamoyl phosphate from L-arginine: step 1/2. This is Arginine deiminase from Treponema denticola (strain ATCC 35405 / DSM 14222 / CIP 103919 / JCM 8153 / KCTC 15104).